Here is a 461-residue protein sequence, read N- to C-terminus: Argininosuccinate lyase (461 aa).

It belongs to the lyase 1 family. Argininosuccinate lyase subfamily.

The protein localises to the cytoplasm. The catalysed reaction is 2-(N(omega)-L-arginino)succinate = fumarate + L-arginine. The protein operates within amino-acid biosynthesis; L-arginine biosynthesis; L-arginine from L-ornithine and carbamoyl phosphate: step 3/3. The chain is Argininosuccinate lyase from Syntrophotalea carbinolica (strain DSM 2380 / NBRC 103641 / GraBd1) (Pelobacter carbinolicus).